A 433-amino-acid polypeptide reads, in one-letter code: Zinc finger and SCAN domain-containing protein 4 (433 aa).

Positions 44-126 (RMVLNSFQDS…RFMEDLTDDS (83 aa)) constitute an SCAN box domain. Polar residues-rich tracts occupy residues 162–184 (SAQT…TSLE) and 277–298 (QPEQ…NSTC). Disordered stretches follow at residues 162 to 199 (SAQT…CNSS) and 272 to 298 (AGCI…NSTC). 4 C2H2-type zinc fingers span residues 312-334 (YKCE…QRRH), 340-362 (FVCP…QIIH), 368-390 (FTCS…ERIH), and 396-418 (YTCP…MRTH). Residues 414–433 (HMRTHEKITPPSVPSTPEAS) form a disordered region.

It is found in the nucleus. It localises to the chromosome. Its subcellular location is the telomere. In terms of biological role, embryonic stem (ES) cell-specific transcription factor required to regulate ES cell pluripotency. Binds telomeres and plays a key role in genomic stability in ES cells by regulating telomere elongation. Acts as an activator of spontaneous telomere sister chromatid exchange (T-SCE) and telomere elongation in undifferentiated ES cells. The chain is Zinc finger and SCAN domain-containing protein 4 (ZSCAN4) from Pongo pygmaeus (Bornean orangutan).